Here is a 357-residue protein sequence, read N- to C-terminus: Protein pelota homolog (357 aa).

The protein belongs to the eukaryotic release factor 1 family. Pelota subfamily. As to quaternary structure, monomer. It depends on a divalent metal cation as a cofactor.

It is found in the cytoplasm. May function in recognizing stalled ribosomes, interact with stem-loop structures in stalled mRNA molecules, and effect endonucleolytic cleavage of the mRNA. May play a role in the release non-functional ribosomes and degradation of damaged mRNAs. Has endoribonuclease activity. This is Protein pelota homolog from Thermococcus gammatolerans (strain DSM 15229 / JCM 11827 / EJ3).